Reading from the N-terminus, the 239-residue chain is Ribosome assembly factor mrt4 (239 aa).

The protein belongs to the universal ribosomal protein uL10 family. In terms of assembly, associates with the pre-60S ribosomal particle.

The protein resides in the nucleus. It localises to the nucleolus. Its subcellular location is the cytoplasm. In terms of biological role, component of the ribosome assembly machinery. Nuclear paralog of the ribosomal protein P0, it binds pre-60S subunits at an early stage of assembly in the nucleolus, and is replaced by P0 in cytoplasmic pre-60S subunits and mature 80S ribosomes. This is Ribosome assembly factor mrt4 from Candida glabrata (strain ATCC 2001 / BCRC 20586 / JCM 3761 / NBRC 0622 / NRRL Y-65 / CBS 138) (Yeast).